A 152-amino-acid polypeptide reads, in one-letter code: SsrA-binding protein (152 aa).

The disordered stretch occupies residues 130-152; that stretch reads HDKRQDLKQRQDKREMERAMKQR. Residues 132 to 152 are compositionally biased toward basic and acidic residues; it reads KRQDLKQRQDKREMERAMKQR.

It belongs to the SmpB family.

The protein localises to the cytoplasm. Its function is as follows. Required for rescue of stalled ribosomes mediated by trans-translation. Binds to transfer-messenger RNA (tmRNA), required for stable association of tmRNA with ribosomes. tmRNA and SmpB together mimic tRNA shape, replacing the anticodon stem-loop with SmpB. tmRNA is encoded by the ssrA gene; the 2 termini fold to resemble tRNA(Ala) and it encodes a 'tag peptide', a short internal open reading frame. During trans-translation Ala-aminoacylated tmRNA acts like a tRNA, entering the A-site of stalled ribosomes, displacing the stalled mRNA. The ribosome then switches to translate the ORF on the tmRNA; the nascent peptide is terminated with the 'tag peptide' encoded by the tmRNA and targeted for degradation. The ribosome is freed to recommence translation, which seems to be the essential function of trans-translation. This Thermosynechococcus vestitus (strain NIES-2133 / IAM M-273 / BP-1) protein is SsrA-binding protein.